Here is a 540-residue protein sequence, read N- to C-terminus: Probable protein kinase UbiB (540 aa).

A helical transmembrane segment spans residues 24 to 44 (LLFEQPLLPWWLASLRLLMPW). Positions 126–494 (RFDVEPLASA…RRRQGDRWAL (369 aa)) constitute a Protein kinase domain. ATP contacts are provided by residues 132-140 (LASASVAQV) and Lys154. Asp289 acts as the Proton acceptor in catalysis. A run of 2 helical transmembrane segments spans residues 496–516 (LLGAGLLGGGAVLAAGAAEAA) and 518–538 (LAAPAAWPAWLMLAAGLYLIV).

This sequence belongs to the ABC1 family. UbiB subfamily.

It localises to the cell inner membrane. The protein operates within cofactor biosynthesis; ubiquinone biosynthesis [regulation]. In terms of biological role, is probably a protein kinase regulator of UbiI activity which is involved in aerobic coenzyme Q (ubiquinone) biosynthesis. This Pseudomonas putida (strain GB-1) protein is Probable protein kinase UbiB.